Here is a 65-residue protein sequence, read N- to C-terminus: Small ribosomal subunit protein bS21 (65 aa).

The protein belongs to the bacterial ribosomal protein bS21 family.

In Geotalea daltonii (strain DSM 22248 / JCM 15807 / FRC-32) (Geobacter daltonii), this protein is Small ribosomal subunit protein bS21.